The sequence spans 397 residues: Elongation factor Tu (397 aa).

The tr-type G domain occupies 10–206 (KPHVNIGTIG…ACDDYIPEPV (197 aa)). The segment at 19–26 (GHIDHGKT) is G1. 19 to 26 (GHIDHGKT) is a GTP binding site. Threonine 26 lines the Mg(2+) pocket. Residues 62 to 66 (GITIS) are G2. A G3 region spans residues 83 to 86 (DCPG). GTP contacts are provided by residues 83-87 (DCPGH) and 138-141 (NKAD). The tract at residues 138 to 141 (NKAD) is G4. The interval 176–178 (SAL) is G5.

This sequence belongs to the TRAFAC class translation factor GTPase superfamily. Classic translation factor GTPase family. EF-Tu/EF-1A subfamily. Monomer.

The protein resides in the cytoplasm. It carries out the reaction GTP + H2O = GDP + phosphate + H(+). GTP hydrolase that promotes the GTP-dependent binding of aminoacyl-tRNA to the A-site of ribosomes during protein biosynthesis. The protein is Elongation factor Tu of Acidothermus cellulolyticus (strain ATCC 43068 / DSM 8971 / 11B).